We begin with the raw amino-acid sequence, 353 residues long: MVVTSNADRICTGITSSNSPHVVKTATQGEVNVTGVIPLTTTPTKSHFANLKGTKTRGKLCPKCLNCTDLDVALGRPKCMGTIPSAKASILHEVKPVTSGCFPIMHDRTKIRQLPNLLRGYENIRLSTHNVINAEAAPGGPYIVGTSGSCPNVTNGNGFFATMAWAVPKNNNNKTATNPLTVEVPFICTEGEDQITVWGFHSDDETQMVKLYGDSKPQKFTSSANGVTTHYVSQIGGFPKQAEDGGLPQSGRIVVDYMVQKSGKTGTITYQRGILLPQKVWCASGRSKVIKGSLPLIGEADCLHEKYGGLNKSKPYYTGEHAKAIGNCPIWVKTPLKLANGTKYRPPAKLLKE.

The N-terminal stretch at M1–A7 is a signal peptide. N-linked (GlcNAc...) asparagine; by host glycosylation is found at N32, N66, N152, N173, N311, and N340.

The protein belongs to the influenza viruses hemagglutinin family. In terms of assembly, homotrimer of disulfide-linked HA1-HA2. Post-translationally, in natural infection, inactive HA is matured into HA1 and HA2 outside the cell by one or more trypsin-like, arginine-specific endoprotease secreted by the bronchial epithelial cells. One identified protease that may be involved in this process is secreted in lungs by club cells. In terms of processing, palmitoylated.

The protein localises to the virion membrane. The protein resides in the host apical cell membrane. Its function is as follows. Binds to sialic acid-containing receptors on the cell surface, bringing about the attachment of the virus particle to the cell. Plays a major role in the determination of host range restriction and virulence. Class I viral fusion protein. Responsible for penetration of the virus into the cell cytoplasm by mediating the fusion of the membrane of the endocytosed virus particle with the endosomal membrane. Low pH in endosomes induce an irreversible conformational change in HA2, releasing the fusion hydrophobic peptide. Several trimers are required to form a competent fusion pore. The polypeptide is Hemagglutinin (HA) (Influenza B virus (strain B/Ann Arbor/1/1986)).